Here is a 310-residue protein sequence, read N- to C-terminus: Protein FAM153A (310 aa).

Disordered stretches follow at residues 39 to 58, 108 to 136, 156 to 184, and 250 to 297; these read LGVP…LCPP, QTNG…HTME, SYNG…DLEE, and TITG…KKSR. The span at 259-268 shows a compositional bias: low complexity; it reads SASPSSAPAE. The segment covering 270–282 has biased composition (basic and acidic residues); that stretch reads ATEKTKVEEEVKT. Over residues 283–297 the composition is skewed to basic residues; it reads RKPKKKTRKPSKKSR.

This sequence belongs to the FAM153 family.

In Homo sapiens (Human), this protein is Protein FAM153A (FAM153A).